The following is an 85-amino-acid chain: ATP synthase subunit c (85 aa).

A run of 2 helical transmembrane segments spans residues 10–30 (IAVA…FAVL) and 53–73 (FIIA…ALLF).

It belongs to the ATPase C chain family. In terms of assembly, F-type ATPases have 2 components, F(1) - the catalytic core - and F(0) - the membrane proton channel. F(1) has five subunits: alpha(3), beta(3), gamma(1), delta(1), epsilon(1). F(0) has three main subunits: a(1), b(2) and c(10-14). The alpha and beta chains form an alternating ring which encloses part of the gamma chain. F(1) is attached to F(0) by a central stalk formed by the gamma and epsilon chains, while a peripheral stalk is formed by the delta and b chains.

The protein resides in the cell inner membrane. F(1)F(0) ATP synthase produces ATP from ADP in the presence of a proton or sodium gradient. F-type ATPases consist of two structural domains, F(1) containing the extramembraneous catalytic core and F(0) containing the membrane proton channel, linked together by a central stalk and a peripheral stalk. During catalysis, ATP synthesis in the catalytic domain of F(1) is coupled via a rotary mechanism of the central stalk subunits to proton translocation. Its function is as follows. Key component of the F(0) channel; it plays a direct role in translocation across the membrane. A homomeric c-ring of between 10-14 subunits forms the central stalk rotor element with the F(1) delta and epsilon subunits. In Vibrio cholerae serotype O1 (strain ATCC 39315 / El Tor Inaba N16961), this protein is ATP synthase subunit c.